We begin with the raw amino-acid sequence, 950 residues long: Protein translocase subunit SecA 1 (950 aa).

Residues Gln83, 101–105 (GEGKT), and Asp490 contribute to the ATP site. The interval 864–950 (EGGAGRKNAA…AKPPKSVKKR (87 aa)) is disordered. Basic and acidic residues predominate over residues 873–888 (AAREEAPSRLRAKGIE).

It belongs to the SecA family. As to quaternary structure, monomer and homodimer. Part of the essential Sec protein translocation apparatus which comprises SecA, SecYEG and auxiliary proteins SecDF. Other proteins may also be involved.

It is found in the cell membrane. It localises to the cytoplasm. It carries out the reaction ATP + H2O + cellular proteinSide 1 = ADP + phosphate + cellular proteinSide 2.. In terms of biological role, part of the Sec protein translocase complex. Interacts with the SecYEG preprotein conducting channel. Has a central role in coupling the hydrolysis of ATP to the transfer of proteins into and across the cell membrane, serving as an ATP-driven molecular motor driving the stepwise translocation of polypeptide chains across the membrane. The polypeptide is Protein translocase subunit SecA 1 (Mycobacterium ulcerans (strain Agy99)).